A 120-amino-acid chain; its full sequence is Ribonuclease P protein component 2 (120 aa).

It belongs to the eukaryotic/archaeal RNase P protein component 2 family. In terms of assembly, homodimer in solution. Component of RNase P which consists of a catalytic RNA component and at least 5 protein subunits. Forms a heterotetrameric subcomplex with Rnp3. Reconstituted enzyme missing individual protein subunits is suboptimally active, showing each subunit contributes to optimization of activity.

The protein resides in the cytoplasm. It carries out the reaction Endonucleolytic cleavage of RNA, removing 5'-extranucleotides from tRNA precursor.. In terms of biological role, part of ribonuclease P, a protein complex that generates mature tRNA molecules by cleaving their 5'-ends. The sequence is that of Ribonuclease P protein component 2 from Pyrococcus horikoshii (strain ATCC 700860 / DSM 12428 / JCM 9974 / NBRC 100139 / OT-3).